Here is a 633-residue protein sequence, read N- to C-terminus: Protein BZZ1 (633 aa).

Positions 5-271 (LSIGNEIKDS…VVKQNKPSLN (267 aa)) constitute an F-BAR domain. Residues 138–210 (DMVNKKDNIY…INQANRTKDK (73 aa)) are a coiled coil. Phosphoserine occurs at positions 327, 463, 472, and 476. Residues 429–495 (VDSKPSSGGS…KKTTQNSSDD (67 aa)) are disordered. A compositionally biased stretch (low complexity) spans 474-493 (NNSIRTTSTNNTKKTTQNSS). 2 SH3 domains span residues 493–555 (SDDG…ISSA) and 577–633 (LPVR…SYCK).

This sequence belongs to the BZZ1 family. Interacts with LAS17 and MYO5.

Its subcellular location is the cytoplasm. It localises to the cytoskeleton. It is found in the actin patch. Plays a role in endocytosis and trafficking to the vacuole. Functions with type I myosins to restore polarity of the actin cytoskeleton after NaCl stress. This Saccharomyces cerevisiae (strain ATCC 204508 / S288c) (Baker's yeast) protein is Protein BZZ1 (BZZ1).